We begin with the raw amino-acid sequence, 146 residues long: D-aminoacyl-tRNA deacylase (146 aa).

The short motif at 137–138 (GP) is the Gly-cisPro motif, important for rejection of L-amino acids element.

This sequence belongs to the DTD family. As to quaternary structure, homodimer.

Its subcellular location is the cytoplasm. It catalyses the reaction glycyl-tRNA(Ala) + H2O = tRNA(Ala) + glycine + H(+). The catalysed reaction is a D-aminoacyl-tRNA + H2O = a tRNA + a D-alpha-amino acid + H(+). An aminoacyl-tRNA editing enzyme that deacylates mischarged D-aminoacyl-tRNAs. Also deacylates mischarged glycyl-tRNA(Ala), protecting cells against glycine mischarging by AlaRS. Acts via tRNA-based rather than protein-based catalysis; rejects L-amino acids rather than detecting D-amino acids in the active site. By recycling D-aminoacyl-tRNA to D-amino acids and free tRNA molecules, this enzyme counteracts the toxicity associated with the formation of D-aminoacyl-tRNA entities in vivo and helps enforce protein L-homochirality. The protein is D-aminoacyl-tRNA deacylase of Bacillus thuringiensis (strain Al Hakam).